We begin with the raw amino-acid sequence, 162 residues long: Ribonuclease P protein component (162 aa).

A disordered region spans residues Met-1–Ser-63. A compositionally biased stretch (basic and acidic residues) spans Gly-21–Glu-38.

The protein belongs to the RnpA family. In terms of assembly, consists of a catalytic RNA component (M1 or rnpB) and a protein subunit.

The enzyme catalyses Endonucleolytic cleavage of RNA, removing 5'-extranucleotides from tRNA precursor.. Functionally, RNaseP catalyzes the removal of the 5'-leader sequence from pre-tRNA to produce the mature 5'-terminus. It can also cleave other RNA substrates such as 4.5S RNA. The protein component plays an auxiliary but essential role in vivo by binding to the 5'-leader sequence and broadening the substrate specificity of the ribozyme. This is Ribonuclease P protein component from Thermus scotoductus.